A 449-amino-acid polypeptide reads, in one-letter code: Mycosin-1 (449 aa).

An N-terminal signal peptide occupies residues 1 to 23 (MQRVAVMVLAVLLALFSAPPAWA). C51 and C120 are disulfide-bonded. The region spanning 66–389 (PWANDYLRIQ…AGVIDPVAAL (324 aa)) is the Peptidase S8 domain. Residues D92 and H123 each act as charge relay system in the active site. Disordered stretches follow at residues 160–179 (FQPK…QTAG) and 240–259 (TGQD…SDPR). Residues 170-179 (NDPNTTQTAG) show a composition bias toward polar residues. A disulfide bridge connects residues C206 and C244. S334 functions as the Charge relay system in the catalytic mechanism. The helical transmembrane segment at 421 to 441 (ITAVVIAGATLAFALGIGALA) threads the bilayer.

The protein belongs to the peptidase S8 family.

It localises to the cell membrane. In terms of biological role, may play a dual role in regulation of ESX-1 secretion and virulence. Acts as a protease that cleaves EspB. The polypeptide is Mycosin-1 (Mycolicibacterium smegmatis (strain ATCC 700084 / mc(2)155) (Mycobacterium smegmatis)).